Here is a 318-residue protein sequence, read N- to C-terminus: Transaldolase (318 aa).

K132 acts as the Schiff-base intermediate with substrate in catalysis.

The protein belongs to the transaldolase family. Type 1 subfamily. In terms of assembly, homodimer.

The protein localises to the cytoplasm. The catalysed reaction is D-sedoheptulose 7-phosphate + D-glyceraldehyde 3-phosphate = D-erythrose 4-phosphate + beta-D-fructose 6-phosphate. It participates in carbohydrate degradation; pentose phosphate pathway; D-glyceraldehyde 3-phosphate and beta-D-fructose 6-phosphate from D-ribose 5-phosphate and D-xylulose 5-phosphate (non-oxidative stage): step 2/3. In terms of biological role, transaldolase is important for the balance of metabolites in the pentose-phosphate pathway. In Shewanella sp. (strain MR-7), this protein is Transaldolase.